Here is a 284-residue protein sequence, read N- to C-terminus: BTB/POZ domain-containing protein 2 (284 aa).

The region spanning 37-108 (SDTTLIIKGE…LYCDSPRIPA (72 aa)) is the BTB domain.

Interacts with cul3.

The protein resides in the cytoplasm. It localises to the nucleus. It participates in protein modification; protein ubiquitination. In terms of biological role, probable substrate-specific adapter of an E3 ubiquitin-protein ligase complex which mediates the ubiquitination and subsequent proteasomal degradation of target proteins. This chain is BTB/POZ domain-containing protein 2 (btb2), found in Schizosaccharomyces pombe (strain 972 / ATCC 24843) (Fission yeast).